The primary structure comprises 464 residues: Chromosomal replication initiator protein DnaA (464 aa).

The segment at 1 to 90 (MNNDNTEVLE…KYWQDEDQSI (90 aa)) is domain I, interacts with DnaA modulators. The domain II stretch occupies residues 90 to 126 (ICSVDICVVSNQDPNLLVDIKDRVDRGIKGNCDNVSS). The interval 127 to 345 (PLDPRFTFDN…GALNKVVAHS (219 aa)) is domain III, AAA+ region. Residues glycine 173, glycine 175, lysine 176, and threonine 177 each contribute to the ATP site. Residues 346-464 (SLVGCSITLD…DINLLNRMLR (119 aa)) are domain IV, binds dsDNA.

The protein belongs to the DnaA family. Oligomerizes as a right-handed, spiral filament on DNA at oriC.

The protein resides in the cytoplasm. Functionally, plays an essential role in the initiation and regulation of chromosomal replication. ATP-DnaA binds to the origin of replication (oriC) to initiate formation of the DNA replication initiation complex once per cell cycle. Binds the DnaA box (a 9 base pair repeat at the origin) and separates the double-stranded (ds)DNA. Forms a right-handed helical filament on oriC DNA; dsDNA binds to the exterior of the filament while single-stranded (ss)DNA is stabiized in the filament's interior. The ATP-DnaA-oriC complex binds and stabilizes one strand of the AT-rich DNA unwinding element (DUE), permitting loading of DNA polymerase. After initiation quickly degrades to an ADP-DnaA complex that is not apt for DNA replication. Binds acidic phospholipids. The chain is Chromosomal replication initiator protein DnaA from Ehrlichia ruminantium (strain Gardel).